A 398-amino-acid polypeptide reads, in one-letter code: ORC1-type DNA replication protein 1 (398 aa).

ATP-binding positions include 67-71 (TGKTA), Y208, and R220.

This sequence belongs to the CDC6/cdc18 family.

Functionally, involved in regulation of DNA replication. This is ORC1-type DNA replication protein 1 (cdc6-1) from Sulfurisphaera tokodaii (strain DSM 16993 / JCM 10545 / NBRC 100140 / 7) (Sulfolobus tokodaii).